A 258-amino-acid chain; its full sequence is Imidazole glycerol phosphate synthase subunit HisF (258 aa).

Residues Asp-12 and Asp-131 contribute to the active site.

It belongs to the HisA/HisF family. Heterodimer of HisH and HisF.

The protein resides in the cytoplasm. It catalyses the reaction 5-[(5-phospho-1-deoxy-D-ribulos-1-ylimino)methylamino]-1-(5-phospho-beta-D-ribosyl)imidazole-4-carboxamide + L-glutamine = D-erythro-1-(imidazol-4-yl)glycerol 3-phosphate + 5-amino-1-(5-phospho-beta-D-ribosyl)imidazole-4-carboxamide + L-glutamate + H(+). It functions in the pathway amino-acid biosynthesis; L-histidine biosynthesis; L-histidine from 5-phospho-alpha-D-ribose 1-diphosphate: step 5/9. In terms of biological role, IGPS catalyzes the conversion of PRFAR and glutamine to IGP, AICAR and glutamate. The HisF subunit catalyzes the cyclization activity that produces IGP and AICAR from PRFAR using the ammonia provided by the HisH subunit. The sequence is that of Imidazole glycerol phosphate synthase subunit HisF from Corynebacterium diphtheriae (strain ATCC 700971 / NCTC 13129 / Biotype gravis).